The following is a 326-amino-acid chain: Pectate lyase plyB (326 aa).

The signal sequence occupies residues 1–15; the sequence is MRFTPLFLLAAVAIA. Ca(2+) is bound by residues D133, D162, and D166. The active site involves R219.

This sequence belongs to the polysaccharide lyase 1 family. Ca(2+) serves as cofactor.

Its subcellular location is the secreted. It catalyses the reaction Eliminative cleavage of (1-&gt;4)-alpha-D-galacturonan to give oligosaccharides with 4-deoxy-alpha-D-galact-4-enuronosyl groups at their non-reducing ends.. The protein operates within glycan metabolism; pectin degradation; 2-dehydro-3-deoxy-D-gluconate from pectin: step 2/5. Its function is as follows. Pectinolytic enzyme consist of four classes of enzymes: pectin lyase, polygalacturonase, pectin methylesterase and rhamnogalacturonase. Among pectinolytic enzymes, pectin lyase is the most important in depolymerization of pectin, since it cleaves internal glycosidic bonds of highly methylated pectins. The chain is Pectate lyase plyB (plyB) from Emericella nidulans (strain FGSC A4 / ATCC 38163 / CBS 112.46 / NRRL 194 / M139) (Aspergillus nidulans).